A 303-amino-acid chain; its full sequence is Diaminopimelate epimerase (303 aa).

A substrate-binding site is contributed by Asn-14. Low complexity predominate over residues 60–74 (PVSSAGATADAAAGR). The disordered stretch occupies residues 60-86 (PVSSAGATADAAAGRPPQPSAGRPPQP). The segment covering 75 to 86 (PPQPSAGRPPQP) has biased composition (pro residues). Position 97 (Asn-97) interacts with substrate. Cys-106 (proton donor) is an active-site residue. Substrate-binding positions include 107–108 (GN), Asn-178, Asn-209, and 227–228 (ER). The active-site Proton acceptor is Cys-236. 237–238 (GS) provides a ligand contact to substrate.

The protein belongs to the diaminopimelate epimerase family. In terms of assembly, homodimer.

It localises to the cytoplasm. The enzyme catalyses (2S,6S)-2,6-diaminopimelate = meso-2,6-diaminopimelate. It functions in the pathway amino-acid biosynthesis; L-lysine biosynthesis via DAP pathway; DL-2,6-diaminopimelate from LL-2,6-diaminopimelate: step 1/1. Functionally, catalyzes the stereoinversion of LL-2,6-diaminopimelate (L,L-DAP) to meso-diaminopimelate (meso-DAP), a precursor of L-lysine and an essential component of the bacterial peptidoglycan. The polypeptide is Diaminopimelate epimerase (Acidothermus cellulolyticus (strain ATCC 43068 / DSM 8971 / 11B)).